We begin with the raw amino-acid sequence, 488 residues long: V-type proton ATPase subunit B 1 (488 aa).

Belongs to the ATPase alpha/beta chains family. As to quaternary structure, V-ATPase is a heteromultimeric enzyme composed of a peripheral catalytic V1 complex (main components: subunits A, B, C, D, E, and F) attached to an integral membrane V0 proton pore complex (main component: the proteolipid protein).

Its function is as follows. Non-catalytic subunit of the peripheral V1 complex of vacuolar ATPase. V-ATPase is responsible for acidifying a variety of intracellular compartments in eukaryotic cells. This chain is V-type proton ATPase subunit B 1, found in Hordeum vulgare (Barley).